We begin with the raw amino-acid sequence, 264 residues long: Carbonic anhydrase 7 (264 aa).

In terms of domain architecture, Alpha-carbonic anhydrase spans 5 to 262 (HGWGYGQDDG…LKGRVVKASF (258 aa)). His-66 functions as the Proton donor/acceptor in the catalytic mechanism. Residues His-96, His-98, and His-121 each contribute to the Zn(2+) site. 201–202 (TT) is a substrate binding site.

The protein belongs to the alpha-carbonic anhydrase family. The cofactor is Zn(2+).

It localises to the cytoplasm. The catalysed reaction is hydrogencarbonate + H(+) = CO2 + H2O. With respect to regulation, activated by histamine, L-adrenaline, L- and D-histidine, and L- and D-phenylalanine. Inhibited by coumarins, sulfonamide derivatives such as acetazolamide (AZA), by saccharin and Foscarnet (phosphonoformate trisodium salt). Its function is as follows. Reversible hydration of carbon dioxide. This is Carbonic anhydrase 7 (CA7) from Homo sapiens (Human).